Here is a 254-residue protein sequence, read N- to C-terminus: Thiazole synthase (254 aa).

The active-site Schiff-base intermediate with DXP is the lysine 96. Residues glycine 157, 183–184 (AG), and 205–206 (NT) each bind 1-deoxy-D-xylulose 5-phosphate.

It belongs to the ThiG family. Homotetramer. Forms heterodimers with either ThiH or ThiS.

The protein localises to the cytoplasm. It catalyses the reaction [ThiS sulfur-carrier protein]-C-terminal-Gly-aminoethanethioate + 2-iminoacetate + 1-deoxy-D-xylulose 5-phosphate = [ThiS sulfur-carrier protein]-C-terminal Gly-Gly + 2-[(2R,5Z)-2-carboxy-4-methylthiazol-5(2H)-ylidene]ethyl phosphate + 2 H2O + H(+). The protein operates within cofactor biosynthesis; thiamine diphosphate biosynthesis. Its function is as follows. Catalyzes the rearrangement of 1-deoxy-D-xylulose 5-phosphate (DXP) to produce the thiazole phosphate moiety of thiamine. Sulfur is provided by the thiocarboxylate moiety of the carrier protein ThiS. In vitro, sulfur can be provided by H(2)S. In Clostridium perfringens (strain 13 / Type A), this protein is Thiazole synthase.